The chain runs to 121 residues: Ribonuclease P protein component (121 aa).

Belongs to the RnpA family. Consists of a catalytic RNA component (M1 or rnpB) and a protein subunit.

The enzyme catalyses Endonucleolytic cleavage of RNA, removing 5'-extranucleotides from tRNA precursor.. Functionally, RNaseP catalyzes the removal of the 5'-leader sequence from pre-tRNA to produce the mature 5'-terminus. It can also cleave other RNA substrates such as 4.5S RNA. The protein component plays an auxiliary but essential role in vivo by binding to the 5'-leader sequence and broadening the substrate specificity of the ribozyme. In Geobacillus kaustophilus (strain HTA426), this protein is Ribonuclease P protein component.